The following is a 583-amino-acid chain: Arginine--tRNA ligase (583 aa).

The short motif at 123–133 is the 'HIGH' region element; it reads PNIAKEMHVGH.

The protein belongs to the class-I aminoacyl-tRNA synthetase family. Monomer.

The protein localises to the cytoplasm. The enzyme catalyses tRNA(Arg) + L-arginine + ATP = L-arginyl-tRNA(Arg) + AMP + diphosphate. The polypeptide is Arginine--tRNA ligase (Blochmanniella floridana).